Here is a 103-residue protein sequence, read N- to C-terminus: Phosphoribosyl-ATP pyrophosphatase (103 aa).

A disordered region spans residues 84 to 103 (LQSREGKLSKTSDRKEINDL).

It belongs to the PRA-PH family.

It is found in the cytoplasm. The catalysed reaction is 1-(5-phospho-beta-D-ribosyl)-ATP + H2O = 1-(5-phospho-beta-D-ribosyl)-5'-AMP + diphosphate + H(+). It participates in amino-acid biosynthesis; L-histidine biosynthesis; L-histidine from 5-phospho-alpha-D-ribose 1-diphosphate: step 2/9. The sequence is that of Phosphoribosyl-ATP pyrophosphatase (hisE) from Listeria innocua serovar 6a (strain ATCC BAA-680 / CLIP 11262).